The chain runs to 182 residues: MSTSSSSSWDNLLESLSLSTVWNWIQASFLGETSAPQQTSLGLLDNLAPAVQIILRISFLILLGIGIYALWKRSIQSIQKTLLFVITLYKLYKKGSHIFEALLANPEGSGLRIQDNNNLFLSLGLQEKILKKLKTVENKMKNLEGIIVAQKPATKRDCSSEPYCSCSDCQSPLSTSGFTSPI.

Residues 51–71 (VQIILRISFLILLGIGIYALW) traverse the membrane as a helical segment. Positions 124-151 (GLQEKILKKLKTVENKMKNLEGIIVAQK) form a coiled coil.

It localises to the membrane. The chain is Transmembrane and coiled-coil domain-containing protein 2 (TMCO2) from Homo sapiens (Human).